Reading from the N-terminus, the 777-residue chain is MFLVLVLLTGLGRLYAGNNPRKTFVQTTVPERISSVDTRRHLEHNVAYNITLKGKSYVVRLKKESFLSSGSVIYFYDNRGVQRSQPLLPEMDCSYSGYVAGFPHSRVVFATCLGLRGVIQFENVSYAIEPLEVLSGFTHMIYEENNDNTHVPLFGKNNSYARIHNLESQGRRSVHKTTVSKLSPRYIDMYIVVNKNLFDYLGSDIKTVTQKIIQVIGLVNAMFTQLKLHVLISSIEIWSRSNKVTNTRRPDDDLFRFSDWKRKHVSLKSHYVAYLLTFDKYPESIGATFPENICNEEYASGIAVYPAGLSLESFAVIIVQLLSLSAGVMYDTSDSCYCSTDVCTMTQEAVFASGLKDFSTCSMDNFKYFASQYGLTCLRNTSYDMPIYKQFPPRRRRICGNSIREEGEECDCGTLRNCTHKKCCDPMQCRMKKGAKCGTGPCCTVDCQFQKANVLCRKSVDKDCDFDEYCNGRSGDCVHDTYAQNGHFCDSGGAFCFNGRCRTHDRQCQALIGGDSRGAPFACYDEVNSRGDVYGNCGRHQCYIQHALCGKLVCTWPHKQLVSRVNLSVVYAHVRDDICVATTKTVRKIIRDLSLTTVLLPEDRDETFVEDGTICGPGQYCDKWFCKEVQFINNGSCNAEIHCQGRGICNNLDNCHCHKGFVPPECAPKKGQFGSLDDGHLVETTKTSGFRKINMRRGYVVLSTKRFQLIFYIGIPVIIIVAAILIKQNQLGKLFCRGEKEHMSSVSEDGSRSVTLSATESKFPADTEHSNKEEDAQ.

Residues 1–16 form the signal peptide; sequence MFLVLVLLTGLGRLYA. A propeptide spanning residues 17-142 is cleaved from the precursor; sequence GNNPRKTFVQ…VLSGFTHMIY (126 aa). At 17–706 the chain is on the extracellular side; sequence GNNPRKTFVQ…RGYVVLSTKR (690 aa). Residues N49 and N123 are each glycosylated (N-linked (GlcNAc...) asparagine). Residues 185–382 form the Peptidase M12B domain; that stretch reads RYIDMYIVVN…YGLTCLRNTS (198 aa). 4 disulfide bridges follow: C294–C377, C336–C361, C338–C343, and C456–C477. One can recognise a Disintegrin domain in the interval 396–485; that stretch reads RRICGNSIRE…DCVHDTYAQN (90 aa). An N-linked (GlcNAc...) asparagine glycan is attached at N566. Residues 633 to 667 form the EGF-like domain; the sequence is NNGSCNAEIHCQGRGICNNLDNCHCHKGFVPPECA. Disulfide bonds link C637–C649, C643–C655, and C657–C666. A helical membrane pass occupies residues 707 to 727; the sequence is FQLIFYIGIPVIIIVAAILIK. Topologically, residues 728–777 are cytoplasmic; that stretch reads QNQLGKLFCRGEKEHMSSVSEDGSRSVTLSATESKFPADTEHSNKEEDAQ. Residues 744–760 show a composition bias toward polar residues; sequence SSVSEDGSRSVTLSATE. The interval 744–777 is disordered; that stretch reads SSVSEDGSRSVTLSATESKFPADTEHSNKEEDAQ. Over residues 763 to 777 the composition is skewed to basic and acidic residues; that stretch reads FPADTEHSNKEEDAQ.

As to quaternary structure, interacts with TEX101. Subject to proteolytic processing during epididymal transit of spermatozoa. In terms of tissue distribution, detected in testis.

It localises to the membrane. Its function is as follows. This is a non catalytic metalloprotease-like protein. May play a role in sperm-egg fusion. In Cavia porcellus (Guinea pig), this protein is Disintegrin and metalloproteinase domain-containing protein 5 (ADAM5).